Consider the following 1325-residue polypeptide: Protein PHYTOCHROME-DEPENDENT LATE-FLOWERING (1325 aa).

Composition is skewed to polar residues over residues 313–331 and 504–515; these read IGST…SVSG and NFPQTSWNVNPG. 5 disordered regions span residues 313–371, 462–558, 593–616, 852–875, and 1160–1325; these read IGST…MPGL, EPFE…EFSG, ANEA…NSLP, VAGQ…NSTQ, and QQQQ…GNNS. The span at 518-529 shows a compositional bias: basic and acidic residues; that stretch reads IEKEPKKEEQFS. Positions 596–607 are enriched in low complexity; that stretch reads AMQQRQHQAQMA. Residues 863-875 show a composition bias toward polar residues; that stretch reads HGNTGNTPNNSTQ. Positions 1160–1224 are enriched in low complexity; the sequence is QQQQQQQLQQ…QQQATASPLQ (65 aa). A compositionally biased stretch (polar residues) spans 1225-1239; the sequence is SVLSPPQVGSPSAGI. A compositionally biased stretch (low complexity) spans 1240-1262; it reads TQQQLQQSSPQQMSQRTPMSPQQ. Composition is skewed to polar residues over residues 1263-1286 and 1293-1325; these read VNQR…TSNL and PQLS…GNNS.

Component of a red light-dependent nuclear complex made of PHL, PHYB and CO. Interacts directly with PHYB and CO; CO binding requires the presence of PHYB. Mostly expressed in cotyledons and leaves, both in mesophyll and vasculature cells. Also present in roots, hypocotyls and shoot apices.

The protein localises to the nucleus. The protein resides in the nuclear body. Its subcellular location is the cytoplasmic granule. It localises to the cytoplasm. In terms of biological role, triggers photoperiod-monitored flowering by repressing PHYB-dependent flowering negative regulation, probably through physical interactions with PHYB and CO. The chain is Protein PHYTOCHROME-DEPENDENT LATE-FLOWERING from Arabidopsis thaliana (Mouse-ear cress).